A 478-amino-acid polypeptide reads, in one-letter code: Proline--tRNA ligase (478 aa).

The protein belongs to the class-II aminoacyl-tRNA synthetase family. ProS type 3 subfamily. As to quaternary structure, homodimer.

The protein localises to the cytoplasm. It catalyses the reaction tRNA(Pro) + L-proline + ATP = L-prolyl-tRNA(Pro) + AMP + diphosphate. In terms of biological role, catalyzes the attachment of proline to tRNA(Pro) in a two-step reaction: proline is first activated by ATP to form Pro-AMP and then transferred to the acceptor end of tRNA(Pro). The chain is Proline--tRNA ligase from Methanothrix thermoacetophila (strain DSM 6194 / JCM 14653 / NBRC 101360 / PT) (Methanosaeta thermophila).